The sequence spans 268 residues: DNA ligase (268 aa).

Lysine 41 (N6-AMP-lysine intermediate) is an active-site residue. Phenylalanine 111, arginine 181, and lysine 187 together coordinate ATP.

This sequence belongs to the ATP-dependent DNA ligase family. A divalent metal cation serves as cofactor.

The enzyme catalyses ATP + (deoxyribonucleotide)n-3'-hydroxyl + 5'-phospho-(deoxyribonucleotide)m = (deoxyribonucleotide)n+m + AMP + diphosphate.. Catalyzes efficient strand joining on a single nicked DNA. The chain is DNA ligase (ligA) from Haemophilus influenzae (strain ATCC 51907 / DSM 11121 / KW20 / Rd).